Consider the following 265-residue polypeptide: Hemin import ATP-binding protein HmuV (265 aa).

The 237-residue stretch at 13–249 folds into the ABC transporter domain; sequence LKASNLHLQL…TAVENVYGWP (237 aa). 45-52 serves as a coordination point for ATP; it reads GPNGAGKS.

It belongs to the ABC transporter superfamily. Heme (hemin) importer (TC 3.A.1.14.5) family. The complex is composed of two ATP-binding proteins (HmuV), two transmembrane proteins (HmuU) and a solute-binding protein (HmuT).

The protein localises to the cell inner membrane. Functionally, part of the ABC transporter complex HmuTUV involved in hemin import. Responsible for energy coupling to the transport system. The sequence is that of Hemin import ATP-binding protein HmuV from Photobacterium damselae subsp. damselae (Listonella damsela).